The sequence spans 345 residues: Protein-glutamate methylesterase/protein-glutamine glutaminase 2 (345 aa).

The Response regulatory domain occupies 7 to 124; sequence KVLVVDDSPV…TADMLGYRSL (118 aa). The residue at position 58 (Asp58) is a 4-aspartylphosphate. The region spanning 154–345 is the CheB-type methylesterase domain; that stretch reads STSQYQLIAI…LPQFLCDLLS (192 aa). Catalysis depends on residues Ser166, His192, and Asp289.

This sequence belongs to the CheB family. In terms of processing, phosphorylated by CheA. Phosphorylation of the N-terminal regulatory domain activates the methylesterase activity.

It is found in the cytoplasm. The catalysed reaction is [protein]-L-glutamate 5-O-methyl ester + H2O = L-glutamyl-[protein] + methanol + H(+). The enzyme catalyses L-glutaminyl-[protein] + H2O = L-glutamyl-[protein] + NH4(+). Its function is as follows. Involved in chemotaxis. Part of a chemotaxis signal transduction system that modulates chemotaxis in response to various stimuli. Catalyzes the demethylation of specific methylglutamate residues introduced into the chemoreceptors (methyl-accepting chemotaxis proteins or MCP) by CheR. Also mediates the irreversible deamidation of specific glutamine residues to glutamic acid. The protein is Protein-glutamate methylesterase/protein-glutamine glutaminase 2 of Vibrio vulnificus (strain YJ016).